Here is a 214-residue protein sequence, read N- to C-terminus: MINFQKARDRMVETQLVSRGIHDRRVLEAMRKVPRHLFVDEALKEQAHSDHPLPIGDKQTISQPYIVALMTQSLELQGHEKILEIGTGSGYQAAVLAELAERVFSIERNPNLAYRANQTLQKLGYKNIIVRVADGTLGWPDEAPFDAILVTAGTPKIPQPLLDQLAEGGRLVVPVGDRLAQELVLVESGPEGMKHTNLGGVRFVDLVGKWGWEG.

The active site involves Ser-62.

This sequence belongs to the methyltransferase superfamily. L-isoaspartyl/D-aspartyl protein methyltransferase family.

The protein resides in the cytoplasm. The enzyme catalyses [protein]-L-isoaspartate + S-adenosyl-L-methionine = [protein]-L-isoaspartate alpha-methyl ester + S-adenosyl-L-homocysteine. In terms of biological role, catalyzes the methyl esterification of L-isoaspartyl residues in peptides and proteins that result from spontaneous decomposition of normal L-aspartyl and L-asparaginyl residues. It plays a role in the repair and/or degradation of damaged proteins. This chain is Protein-L-isoaspartate O-methyltransferase 1, found in Syntrophobacter fumaroxidans (strain DSM 10017 / MPOB).